The sequence spans 113 residues: Hydrogenase maturation factor HypA (113 aa).

Histidine 2 provides a ligand contact to Ni(2+). The Zn(2+) site is built by cysteine 73, cysteine 76, cysteine 89, and cysteine 92.

Belongs to the HypA/HybF family.

Its function is as follows. Involved in the maturation of [NiFe] hydrogenases. Required for nickel insertion into the metal center of the hydrogenase. This Beijerinckia indica subsp. indica (strain ATCC 9039 / DSM 1715 / NCIMB 8712) protein is Hydrogenase maturation factor HypA.